Consider the following 679-residue polypeptide: Protein hook (679 aa).

Residues 6–123 enclose the Calponin-homology (CH) domain; it reads NEMYYSLLEW…RLLQLVLGCA (118 aa). 2 coiled-coil regions span residues 135–437 and 480–574; these read EIMC…LKCG and QTAL…QEIL.

The protein belongs to the hook family. Homodimer. Interacts with microtubules via its N-terminus.

It is found in the cytoplasm. The protein localises to the cytoskeleton. It localises to the endosome. The protein resides in the synapse. Involved in endocytic trafficking by stabilizing organelles of the endocytic pathway. Probably acts as a cytoskeletal linker protein required to tether endosome vesicles to the cytoskeleton. Involved in modulation of endocytosis at stages required for down-regulation of membrane proteins that control synapse size. Not involved in synaptic vesicle recycling. Required in R7 cells for boss endocytosis into multivesicular bodies (MVBs). Has a role in regulating adult longevity. This Drosophila erecta (Fruit fly) protein is Protein hook.